A 443-amino-acid polypeptide reads, in one-letter code: Cyclic GMP-AMP synthase (443 aa).

S61 lines the ATP pocket. Catalysis depends on residues D78 and D80. D80 lines the Mg(2+) pocket. N124 contributes to the ATP binding site. D138 is an active-site residue. Mg(2+) is bound at residue D138. L208 provides a ligand contact to ATP.

Belongs to the CD-NTase family. B06 subfamily. Requires Mg(2+) as cofactor.

It catalyses the reaction GTP + ATP = 3',3'-cGAMP + 2 diphosphate. It carries out the reaction UTP + ATP = 3',3'-cUAMP + 2 diphosphate. The catalysed reaction is 2 ATP = 3',3'-c-di-AMP + 2 diphosphate. The enzyme catalyses 2 GTP = 3',3'-c-di-GMP + 2 diphosphate. It catalyses the reaction UTP + GTP = 3',3'-cGMP-UMP + 2 diphosphate. Functionally, cyclic nucleotide synthase (second messenger synthase) of a CBASS antivirus system. CBASS (cyclic oligonucleotide-based antiphage signaling system) provides immunity against bacteriophages. The CD-NTase protein (CdnB, this protein) synthesizes cyclic nucleotides in response to infection; these serve as specific second messenger signals. The signals activate a diverse range of effectors, leading to bacterial cell death and thus abortive phage infection. The effector protein for this system is membrane protein Cap15. Catalyzes the synthesis of 3',3'-cyclic GMP-AMP (3'3'-cGAMP) from GTP and ATP, a second messenger in cell signal transduction. Also makes cyclic UMP-AMP, cyclic UMP-GMP, cyclic di-AMP and cyclic-di-GMP. In terms of biological role, protects E.coli against phage infection. When the CBASS operon (cdnB-cap15) is introduced in E.coli MG1655 there is about 100-fold protection against phage T2 and about 10-fold protection against phage T5 and T6. In Escherichia albertii, this protein is Cyclic GMP-AMP synthase.